Reading from the N-terminus, the 175-residue chain is Large ribosomal subunit protein uL10 (175 aa).

This sequence belongs to the universal ribosomal protein uL10 family. In terms of assembly, part of the ribosomal stalk of the 50S ribosomal subunit. The N-terminus interacts with L11 and the large rRNA to form the base of the stalk. The C-terminus forms an elongated spine to which L12 dimers bind in a sequential fashion forming a multimeric L10(L12)X complex.

Its function is as follows. Forms part of the ribosomal stalk, playing a central role in the interaction of the ribosome with GTP-bound translation factors. The protein is Large ribosomal subunit protein uL10 of Psychrobacter sp. (strain PRwf-1).